The primary structure comprises 361 residues: Thermostable alkaline protease (361 aa).

The N-terminal stretch at 1–24 (MRQSLKVMVLSTVALLFMANPAAA) is a signal peptide. A propeptide spanning residues 25–93 (SEEKKEYLIV…IEKNAEVTIS (69 aa)) is cleaved from the precursor. Q94 lines the Ca(2+) pocket. In terms of domain architecture, Peptidase S8 spans 97–360 (PWGISFINTQ…NGLVHAGRAT (264 aa)). Residue D124 is the Charge relay system of the active site. D132 contributes to the Ca(2+) binding site. The active-site Charge relay system is the H154. The Ca(2+) site is built by L165, N167, I169, V171, A255, Y257, and V260. S307 functions as the Charge relay system in the catalytic mechanism.

The protein belongs to the peptidase S8 family. It depends on Ca(2+) as a cofactor.

It is found in the secreted. Functionally, shows keratinolytic activity. This Halalkalibacterium halodurans (strain ATCC BAA-125 / DSM 18197 / FERM 7344 / JCM 9153 / C-125) (Bacillus halodurans) protein is Thermostable alkaline protease.